The following is a 1006-amino-acid chain: MDVRCINWFESHGENRFLYLKSRCRNGETVFIRFPHYFYYVVTDEIYQSLSPPPFNARPLGKMRTIDIDETISYNLDIKDRKCSVADMWLIEEPKKRSIQNATMDEFLNISWFYISNGISPDGCYSLDEQYLTKINNGCYHCDDPRNCFAKKIPRFDIPRSYLFLDIECHFDKKFPSVFINPISHTSYCYIDLSGKRLLFTLINEEMLTEQEIQEAVDRGCLRIQSLMEMDYERELVLCSEIVLLRIAKQLLELTFDYVVTFNGHNFDLRYITNRLELLTGEKIIFRSPDKKEAVYLCIYERNQSSHKGVGGMANTTFHVNNNNGTIFFDLYSFIQKSEKLDSYKLDSISKNAFSCMGKVLNRGVREMTFIGDDTTDAKGKAAAFAKVLTTGNYVTVDEDIICKVIRKDIWENGFKVVLLCPTLPNDTYKLSFGKDDVDLAQMYKDYNLNIALDMARYCIHDACLCQYLWEYYGVETKTDAGASTYVLPQSMVFEYRASTVIKGPLLKLLLETKTILVRSETKQKFPYEGGKVFAPKQKMFSNNVLIFDYNSLYPNVCIFGNLSPETLVGVVVSTNRLEEEINNQLLLQKYPPPRYITVHCEPRLPNLISEIAIFDRSIEGTIPRLLRTFLAERARYKKMLKQATSSTEKAIYDSMQYTYKIVANSVYGLMGFRNSALYSYASAKSCTSIGRRMILYLESVLNGAELSNGMLRFANPLSNPFYMDDRDINPIVKTSLPIDYRFRFRSVYGDTDSVFTEIDSQDVDKSIEIAKELERLINNRVLFNNFKIEFEAVYKNLIMQSKKKYTTMKYSASSNSKSVPERINKGTSETRRDVSKFHKNMIKTYKTRLSEMLSEGRMNSNQVCIDILRSLETDLRSEFDSRSSPLELFMLSRMHHSNYKSADNPNMYLVTEYNKNNPETIELGERYYFAYICPANVPWTKKLVNIKTYETIIDRSFKLGSDQRIFYEVYFKRLTSEIVNLLDNKVLCISFFERMFGSKPTFYEA.

Belongs to the DNA polymerase type-B family. As to quaternary structure, interacts with OPG148/A20. Component of the Uracil-DNA glycosylase(UDG)-OPG148/A20-polymerase complex; OPG148/A20 and OPG116/UDG form a heterodimeric processivity factor that associates with OPG071/E9 to form the processive polymerase holoenzyme.

The enzyme catalyses DNA(n) + a 2'-deoxyribonucleoside 5'-triphosphate = DNA(n+1) + diphosphate. Functionally, catalyzes DNA synthesis. Acquires processivity by associating with a heterodimeric processivity factor comprised of the viral OPG148/A20 and OPG116/D4 proteins, thereby forming the DNA polymerase holoenzyme. Displays 3'- to 5' exonuclease activity. Might participate in viral DNA recombination. Does not perform OPG116/D4synthesis across an abasic site. This Bos taurus (Bovine) protein is DNA polymerase (OPG071).